We begin with the raw amino-acid sequence, 160 residues long: uncharacterized protein (160 aa).

The N-acetyltransferase domain maps to 9–151 (LLINYKTLEK…GENPLIWLPE (143 aa)).

This is an uncharacterized protein from Oceanobacillus iheyensis (strain DSM 14371 / CIP 107618 / JCM 11309 / KCTC 3954 / HTE831).